The chain runs to 248 residues: Triosephosphate isomerase (248 aa).

9–11 (NWK) is a binding site for substrate. The active-site Electrophile is His94. Glu166 serves as the catalytic Proton acceptor. Residues Gly172, Ser212, and 233–234 (GG) contribute to the substrate site.

This sequence belongs to the triosephosphate isomerase family. Homodimer.

Its subcellular location is the cytoplasm. The catalysed reaction is D-glyceraldehyde 3-phosphate = dihydroxyacetone phosphate. The protein operates within carbohydrate biosynthesis; gluconeogenesis. Its pathway is carbohydrate degradation; glycolysis; D-glyceraldehyde 3-phosphate from glycerone phosphate: step 1/1. Involved in the gluconeogenesis. Catalyzes stereospecifically the conversion of dihydroxyacetone phosphate (DHAP) to D-glyceraldehyde-3-phosphate (G3P). This Clostridium botulinum (strain Eklund 17B / Type B) protein is Triosephosphate isomerase.